The sequence spans 673 residues: Protein kinase C delta type (673 aa).

Residues 1–106 (MAPFLRISFN…KNNGKAEFWL (106 aa)) form the C2 domain. Phosphothreonine occurs at positions 43 and 50. Position 64 is a phosphotyrosine (Tyr-64). A Phosphoserine modification is found at Ser-130. At Thr-141 the chain carries Phosphothreonine. Tyr-155 carries the phosphotyrosine modification. Residues 158-208 (NHEFIATFFGQPTFCSVCKEFVWGLNKQGYKCRQCNAAIHKKCIDKIIGRC) form a Phorbol-ester/DAG-type 1 zinc finger. Thr-218 is subject to Phosphothreonine. The Phorbol-ester/DAG-type 2 zinc-finger motif lies at 230–280 (PHRFKVYNYMSPTFCDHCGTLLWGLVKQGLKCEDCGMNVHHKCREKVANLC). The residue at position 299 (Ser-299) is a Phosphoserine; by autocatalysis. Phosphotyrosine; by SRC occurs at positions 311 and 332. The 255-residue stretch at 347–601 (FTFQKVLGKG…TGNIRLHPFF (255 aa)) folds into the Protein kinase domain. 353–361 (LGKGSFGKV) provides a ligand contact to ATP. Tyr-372 carries the post-translational modification Phosphotyrosine. ATP is bound at residue Lys-376. A Phosphothreonine modification is found at Thr-449. Residue Asp-471 is the Proton acceptor of the active site. Ser-504 bears the Phosphoserine mark. Residue Thr-505 is modified to Phosphothreonine; by autocatalysis. The residue at position 565 (Tyr-565) is a Phosphotyrosine. In terms of domain architecture, AGC-kinase C-terminal spans 602-673 (KTINWNLLEK…VNPKYEQFLE (72 aa)). Residues Ser-643, Ser-652, and Ser-662 each carry the phosphoserine modification.

It belongs to the protein kinase superfamily. AGC Ser/Thr protein kinase family. PKC subfamily. As to quaternary structure, interacts with PDPK1 (via N-terminal region). Interacts with RAD9A. Interacts with CDCP1. Interacts with MUC1. Interacts with VASP. Interacts with CAVIN3. Interacts with PRKD2 (via N-terminus and zing-finger domain 1 and 2) in response to oxidative stress; the interaction is independent of PRKD2 tyrosine phosphorylation. Interacts with PLSC3; interaction is enhanced by UV irradiation. Autophosphorylated and/or phosphorylated at Thr-505, within the activation loop; phosphorylation at Thr-505 is not a prerequisite for enzymatic activity. Autophosphorylated at Ser-299. Upon TNFSF10/TRAIL treatment, phosphorylated at Tyr-155; phosphorylation is required for its translocation to the endoplasmic reticulum and cleavage by caspase-3. Phosphorylated at Tyr-311, Tyr-332 and Tyr-565; phosphorylation of Tyr-311 and Tyr-565 following thrombin or zymosan stimulation potentiates its kinase activity. Phosphorylated by protein kinase PDPK1; phosphorylation is inhibited by the apoptotic C-terminal cleavage product of PKN2. Phosphorylated at Tyr-311 and Tyr-332 by SRC; phosphorylation leads to enhanced autophosphorylation at Thr-505. Phosphorylated at Tyr-311 through a SYK and SRC mechanism downstream of C-type lectin receptors activation, promoting its activation. Post-translationally, proteolytically cleaved into a catalytic subunit and a regulatory subunit by caspase-3 during apoptosis which results in kinase activation.

It localises to the cytoplasm. Its subcellular location is the nucleus. It is found in the perinuclear region. The protein localises to the cell membrane. The protein resides in the mitochondrion. It localises to the endomembrane system. It carries out the reaction L-seryl-[protein] + ATP = O-phospho-L-seryl-[protein] + ADP + H(+). It catalyses the reaction L-threonyl-[protein] + ATP = O-phospho-L-threonyl-[protein] + ADP + H(+). The catalysed reaction is L-tyrosyl-[protein] + ATP = O-phospho-L-tyrosyl-[protein] + ADP + H(+). Its activity is regulated as follows. Novel PKCs (PRKCD, PRKCE, PRKCH and PRKCQ) are calcium-insensitive, but activated by diacylglycerol (DAG) and phosphatidylserine. Three specific sites; Thr-505 (activation loop of the kinase domain), Ser-643 (turn motif) and Ser-662 (hydrophobic region), need to be phosphorylated for its full activation. Activated by caspase-3 (CASP3) cleavage during apoptosis. After cleavage, the pseudosubstrate motif in the regulatory subunit is released from the substrate recognition site of the catalytic subunit, which enables PRKCD to become constitutively activated. The catalytic subunit which displays properties of a sphingosine-dependent protein kinase is activated by D-erythro-sphingosine (Sph) or N,N-dimethyl-D-erythrosphingosine (DMS) or N,N,N-trimethyl-D-erythrosphingosine (TMS), but not by ceramide or Sph-1-P and is strongly inhibited by phosphatidylserine. Functionally, calcium-independent, phospholipid- and diacylglycerol (DAG)-dependent serine/threonine-protein kinase that plays contrasting roles in cell death and cell survival by functioning as a pro-apoptotic protein during DNA damage-induced apoptosis, but acting as an anti-apoptotic protein during cytokine receptor-initiated cell death, is involved in tumor suppression, is required for oxygen radical production by NADPH oxidase and acts as a positive or negative regulator in platelet functional responses. Upon DNA damage, activates the promoter of the death-promoting transcription factor BCLAF1/Btf to trigger BCLAF1-mediated p53/TP53 gene transcription and apoptosis. In response to oxidative stress, interact with and activate CHUK/IKKA in the nucleus, causing the phosphorylation of p53/TP53. In the case of ER stress or DNA damage-induced apoptosis, can form a complex with the tyrosine-protein kinase ABL1 which trigger apoptosis independently of p53/TP53. In cytosol can trigger apoptosis by activating MAPK11 or MAPK14, inhibiting AKT1 and decreasing the level of X-linked inhibitor of apoptosis protein (XIAP), whereas in nucleus induces apoptosis via the activation of MAPK8 or MAPK9. Upon ionizing radiation treatment, is required for the activation of the apoptosis regulators BAX and BAK, which trigger the mitochondrial cell death pathway. Can phosphorylate MCL1 and target it for degradation which is sufficient to trigger for BAX activation and apoptosis. Is required for the control of cell cycle progression both at G1/S and G2/M phases. Mediates phorbol 12-myristate 13-acetate (PMA)-induced inhibition of cell cycle progression at G1/S phase by up-regulating the CDK inhibitor CDKN1A/p21 and inhibiting the cyclin CCNA2 promoter activity. In response to UV irradiation can phosphorylate CDK1, which is important for the G2/M DNA damage checkpoint activation. Can protect glioma cells from the apoptosis induced by TNFSF10/TRAIL, probably by inducing increased phosphorylation and subsequent activation of AKT1. Can also act as tumor suppressor upon mitogenic stimulation with PMA or TPA. In N-formyl-methionyl-leucyl-phenylalanine (fMLP)-treated cells, is required for NCF1 (p47-phox) phosphorylation and activation of NADPH oxidase activity, and regulates TNF-elicited superoxide anion production in neutrophils, by direct phosphorylation and activation of NCF1 or indirectly through MAPK1/3 (ERK1/2) signaling pathways. Involved in antifungal immunity by mediating phosphorylation and activation of CARD9 downstream of C-type lectin receptors activation, promoting interaction between CARD9 and BCL10, followed by activation of NF-kappa-B and MAP kinase p38 pathways. May also play a role in the regulation of NADPH oxidase activity in eosinophil after stimulation with IL5, leukotriene B4 or PMA. In collagen-induced platelet aggregation, acts a negative regulator of filopodia formation and actin polymerization by interacting with and negatively regulating VASP phosphorylation. Downstream of PAR1, PAR4 and CD36/GP4 receptors, regulates differentially platelet dense granule secretion; acts as a positive regulator in PAR-mediated granule secretion, whereas it negatively regulates CD36/GP4-mediated granule release. Phosphorylates MUC1 in the C-terminal and regulates the interaction between MUC1 and beta-catenin. The catalytic subunit phosphorylates 14-3-3 proteins (YWHAB, YWHAZ and YWHAH) in a sphingosine-dependent fashion. Phosphorylates ELAVL1 in response to angiotensin-2 treatment. Phosphorylates mitochondrial phospholipid scramblase 3 (PLSCR3), resulting in increased cardiolipin expression on the mitochondrial outer membrane which facilitates apoptosis. Phosphorylates SMPD1 which induces SMPD1 secretion. Its function is as follows. Truncated isoform 2 is inactive. This chain is Protein kinase C delta type, found in Rattus norvegicus (Rat).